Here is a 373-residue protein sequence, read N- to C-terminus: ATP-dependent 6-phosphofructokinase (373 aa).

ATP contacts are provided by residues glycine 12, 74–75 (RD), and 110–113 (GGGT). Substrate contacts are provided by residues 133-135 (TID), arginine 170, 177-179 (MGH), glutamate 230, arginine 291, and 297-300 (YVQR). Aspartate 135 serves as the catalytic Proton acceptor.

This sequence belongs to the phosphofructokinase type A (PFKA) family. Mixed-substrate PFK group III subfamily. As to quaternary structure, homodimer or homotetramer. Requires Mg(2+) as cofactor.

It localises to the cytoplasm. The catalysed reaction is beta-D-fructose 6-phosphate + ATP = beta-D-fructose 1,6-bisphosphate + ADP + H(+). Its pathway is carbohydrate degradation; glycolysis; D-glyceraldehyde 3-phosphate and glycerone phosphate from D-glucose: step 3/4. Catalyzes the phosphorylation of D-fructose 6-phosphate to fructose 1,6-bisphosphate by ATP, the first committing step of glycolysis. The chain is ATP-dependent 6-phosphofructokinase from Propionibacterium freudenreichii subsp. shermanii (strain ATCC 9614 / DSM 4902 / CIP 103027 / NCIMB 8099 / CIRM-BIA1).